We begin with the raw amino-acid sequence, 168 residues long: Pathogenesis-related protein 1A (168 aa).

The N-terminal stretch at 1-30 (MGFVLFSQLPSFLLVSTLLLFLVISHSCRA) is a signal peptide. An SCP domain is found at 38–156 (LDAHNTARAD…NGGYVVSCNY (119 aa)).

This sequence belongs to the CRISP family. Post-translationally, three disulfide bonds are present.

The protein resides in the vacuole. Probably involved in the defense reaction of plants against pathogens. The protein is Pathogenesis-related protein 1A of Nicotiana tabacum (Common tobacco).